The sequence spans 533 residues: Chromosomal replication initiator protein DnaA (533 aa).

The segment at 1–72 (MNDFWQHCSA…DLARDFWNAP (72 aa)) is domain I, interacts with DnaA modulators. Positions 72 to 196 (PIEVQFVLDP…EAADSMYERS (125 aa)) are domain II. A disordered region spans residues 83-113 (AGQRSPAGATPLAPRAPLPSANPAPVAPGPA). A compositionally biased stretch (pro residues) spans 96-110 (PRAPLPSANPAPVAP). Positions 197 to 413 (KLNPVLTFDN…GALRKILAYS (217 aa)) are domain III, AAA+ region. The ATP site is built by G241, G243, K244, and T245. Positions 414 to 533 (KFHGREITIE…LHVLEQTLKG (120 aa)) are domain IV, binds dsDNA.

It belongs to the DnaA family. As to quaternary structure, oligomerizes as a right-handed, spiral filament on DNA at oriC.

The protein resides in the cytoplasm. Its function is as follows. Plays an essential role in the initiation and regulation of chromosomal replication. ATP-DnaA binds to the origin of replication (oriC) to initiate formation of the DNA replication initiation complex once per cell cycle. Binds the DnaA box (a 9 base pair repeat at the origin) and separates the double-stranded (ds)DNA. Forms a right-handed helical filament on oriC DNA; dsDNA binds to the exterior of the filament while single-stranded (ss)DNA is stabiized in the filament's interior. The ATP-DnaA-oriC complex binds and stabilizes one strand of the AT-rich DNA unwinding element (DUE), permitting loading of DNA polymerase. After initiation quickly degrades to an ADP-DnaA complex that is not apt for DNA replication. Binds acidic phospholipids. The sequence is that of Chromosomal replication initiator protein DnaA from Burkholderia mallei (strain SAVP1).